An 88-amino-acid polypeptide reads, in one-letter code: Small ribosomal subunit protein uS15c (88 aa).

This sequence belongs to the universal ribosomal protein uS15 family. In terms of assembly, part of the 30S ribosomal subunit.

Its subcellular location is the plastid. The protein localises to the chloroplast. In Pinus koraiensis (Korean pine), this protein is Small ribosomal subunit protein uS15c (rps15).